A 167-amino-acid polypeptide reads, in one-letter code: Crossover junction endodeoxyribonuclease RuvC (167 aa).

Catalysis depends on residues Asp-8, Glu-67, and Asp-139. Mg(2+) contacts are provided by Asp-8, Glu-67, and Asp-139.

The protein belongs to the RuvC family. In terms of assembly, homodimer which binds Holliday junction (HJ) DNA. The HJ becomes 2-fold symmetrical on binding to RuvC with unstacked arms; it has a different conformation from HJ DNA in complex with RuvA. In the full resolvosome a probable DNA-RuvA(4)-RuvB(12)-RuvC(2) complex forms which resolves the HJ. The cofactor is Mg(2+).

The protein localises to the cytoplasm. The enzyme catalyses Endonucleolytic cleavage at a junction such as a reciprocal single-stranded crossover between two homologous DNA duplexes (Holliday junction).. Its function is as follows. The RuvA-RuvB-RuvC complex processes Holliday junction (HJ) DNA during genetic recombination and DNA repair. Endonuclease that resolves HJ intermediates. Cleaves cruciform DNA by making single-stranded nicks across the HJ at symmetrical positions within the homologous arms, yielding a 5'-phosphate and a 3'-hydroxyl group; requires a central core of homology in the junction. The consensus cleavage sequence is 5'-(A/T)TT(C/G)-3'. Cleavage occurs on the 3'-side of the TT dinucleotide at the point of strand exchange. HJ branch migration catalyzed by RuvA-RuvB allows RuvC to scan DNA until it finds its consensus sequence, where it cleaves and resolves the cruciform DNA. This Halorhodospira halophila (strain DSM 244 / SL1) (Ectothiorhodospira halophila (strain DSM 244 / SL1)) protein is Crossover junction endodeoxyribonuclease RuvC.